The chain runs to 83 residues: Mu-theraphotoxin-Hhn2m (83 aa).

A signal peptide spans 1-21 (MKASMFLALAGLVLLFVVGYA). Residues 22-48 (SESEEKEFPIELLSKIFAVDVFKGEER) constitute a propeptide that is removed on maturation. 3 cysteine pairs are disulfide-bonded: cysteine 50-cysteine 65, cysteine 57-cysteine 70, and cysteine 64-cysteine 77. The residue at position 81 (leucine 81) is a Leucine amide.

Belongs to the neurotoxin 10 (Hwtx-1) family. 15 (Hntx-3) subfamily. As to quaternary structure, monomer. In terms of tissue distribution, expressed by the venom gland.

The protein localises to the secreted. Functionally, lethal neurotoxin. Selectively blocks tetrodotoxin-sensitive voltage-gated sodium channels (Nav). Does not affect tetrodotoxin-resistant voltage-gated sodium channels or calcium channels. The protein is Mu-theraphotoxin-Hhn2m of Cyriopagopus hainanus (Chinese bird spider).